Reading from the N-terminus, the 379-residue chain is Anomalous homeobox protein (379 aa).

A DNA-binding region (homeobox) is located at residues 135-196; the sequence is PEGLKSRNFP…NYRRRQRALP (62 aa). Residues 195–283 are disordered; sequence LPQHMKPAQQ…SKPLDVSGHP (89 aa). Residues 237–246 are compositionally biased toward basic and acidic residues; the sequence is QWSEEREEKG.

It localises to the nucleus. The sequence is that of Anomalous homeobox protein (ANHX) from Homo sapiens (Human).